Consider the following 309-residue polypeptide: ADP-L-glycero-D-manno-heptose-6-epimerase (309 aa).

NADP(+) is bound by residues 10–11, 31–32, Lys38, Lys53, 75–79, and Asn92; these read LI, DN, and QGACS. Tyr139 acts as the Proton acceptor in catalysis. Lys143 lines the NADP(+) pocket. Residue Asn168 participates in substrate binding. Residues Val169 and Lys177 each coordinate NADP(+). The Proton acceptor role is filled by Lys177. Residues Ser179, His186, 200–203, Arg208, and Tyr271 each bind substrate; that span reads FAGS.

This sequence belongs to the NAD(P)-dependent epimerase/dehydratase family. HldD subfamily. In terms of assembly, homopentamer. It depends on NADP(+) as a cofactor.

The enzyme catalyses ADP-D-glycero-beta-D-manno-heptose = ADP-L-glycero-beta-D-manno-heptose. It participates in nucleotide-sugar biosynthesis; ADP-L-glycero-beta-D-manno-heptose biosynthesis; ADP-L-glycero-beta-D-manno-heptose from D-glycero-beta-D-manno-heptose 7-phosphate: step 4/4. Its function is as follows. Catalyzes the interconversion between ADP-D-glycero-beta-D-manno-heptose and ADP-L-glycero-beta-D-manno-heptose via an epimerization at carbon 6 of the heptose. In Histophilus somni (strain 2336) (Haemophilus somnus), this protein is ADP-L-glycero-D-manno-heptose-6-epimerase.